Consider the following 353-residue polypeptide: Serine/threonine-protein phosphatase 2A activator 1 (353 aa).

The tract at residues 331-353 is disordered; that stretch reads ANNATTKMPPPLSTSTSRFIHRR. The span at 343 to 353 shows a compositional bias: polar residues; it reads STSTSRFIHRR.

Belongs to the PTPA-type PPIase family.

It localises to the cytoplasm. The protein localises to the nucleus. The catalysed reaction is [protein]-peptidylproline (omega=180) = [protein]-peptidylproline (omega=0). Its function is as follows. PPIases accelerate the folding of proteins. It catalyzes the cis-trans isomerization of proline imidic peptide bonds in oligopeptides. Acts as a regulatory subunit for PP2A-like phosphatases modulating their activity or substrate specificity, probably by inducing a conformational change in the catalytic subunit, a direct target of the PPIase. Can reactivate inactive phosphatase PP2A-phosphatase methylesterase complexes (PP2Ai) in presence of ATP and Mg(2+) by dissociating the inactive form from the complex. This is Serine/threonine-protein phosphatase 2A activator 1 (RRD1) from Kluyveromyces lactis (strain ATCC 8585 / CBS 2359 / DSM 70799 / NBRC 1267 / NRRL Y-1140 / WM37) (Yeast).